The sequence spans 1040 residues: Multidrug resistance protein MdtB (1040 aa).

The next 12 membrane-spanning stretches (helical) occupy residues 16–36 (FIMR…AGII), 347–367 (LMMA…NIPA), 369–389 (IIPG…MVFL), 396–416 (LTLM…IVVI), 440–460 (IGFT…PLLF), 472–492 (FAIT…TLTP), 537–557 (WLTL…WVFI), 863–883 (LGST…VLGI), 888–908 (FIHP…ALLA), 911–931 (IAGS…IGIV), 968–988 (ILMT…STGV), and 998–1018 (IGMV…TPVI).

This sequence belongs to the resistance-nodulation-cell division (RND) (TC 2.A.6) family. MdtB subfamily. In terms of assembly, part of a tripartite efflux system composed of MdtA, MdtB and MdtC. MdtB forms a heteromultimer with MdtC.

It localises to the cell inner membrane. The sequence is that of Multidrug resistance protein MdtB from Shigella sonnei (strain Ss046).